The chain runs to 274 residues: Short-chain dehydrogenase/reductase bsc3 (274 aa).

The NADP(+) site is built by Ile14, Tyr170, Lys174, Ile203, and Thr205. The active-site Proton donor is Tyr170. Lys174 serves as the catalytic Lowers pKa of active site Tyr.

Belongs to the short-chain dehydrogenases/reductases (SDR) family.

It participates in mycotoxin biosynthesis. Functionally, short-chain dehydrogenase/reductase; part of the gene cluster that mediates the biosynthesis of the diterpene glucoside brassicicene C. In the first step of the brassicicene C biosynthesis, the bifunctional diterpene synthase bsc8 that possesses both prenyl transferase and terpene cyclase activity, converts isopentenyl diphosphate and dimethylallyl diphosphate into geranylgeranyl diphosphate (GGDP) that is further converted into fusicocca-2,10(14)-diene, the first precursor for brassicicene C. Fusicocca-2,10(14)-diene is then substrate of cytochrome P450 monooxygenase bsc1 for hydroxylation at the C-8 position. Oxidation at C-16 position to aldehyde is then catalyzed by the cytochrome P450 monooyxygenase bsc7, yielding fusicocca-2,10(14)-diene-8-beta,16-diol. Follows the isomerization of the double bond and reduction of aldehyde to alcohol catalyzed by the short-chain dehydrogenase/reductase bsc3 to yield the diol compound fusicocca-1,10(14)-diene-8 beta,16-diol. The next step is the oxidation at the C-3 position of fusicocca-2,10(14)-diene-8-beta,16-diol catalyzed by the alpha-ketoglutarate dependent dioxygenase bsc9, to produce a triol compound. Methylation of the hydroxy group at position 16 is performed by the methyltransferase bsc6. 16-O-methylation is followed by oxidation at the C-13 position to ketone and an alkyl shift of the methyl group leads to brassicicene C. Although the probable acetyltransferase bsc4 is included in the gene cluster, no acetylation reactions are necessary for brassicicene C biosynthesis. However, the fact that brassicicene E, which is a structurally related compound having an acetoxy group at position 12, was previously isolated from another strain of A.brassicicola suggests that the ATCC 96836 strain might also produce a small amount of brassicicene E. The protein is Short-chain dehydrogenase/reductase bsc3 of Alternaria brassicicola (Dark leaf spot agent).